The chain runs to 128 residues: uncharacterized protein (128 aa).

The interval Leu25–Asp61 is disordered. The segment covering Glu44 to Asp61 has biased composition (polar residues).

This is an uncharacterized protein from Homo sapiens (Human).